Here is a 74-residue protein sequence, read N- to C-terminus: Translational regulator CsrA (74 aa).

Belongs to the CsrA/RsmA family. In terms of assembly, homodimer; the beta-strands of each monomer intercalate to form a hydrophobic core, while the alpha-helices form wings that extend away from the core.

Its subcellular location is the cytoplasm. Functionally, a translational regulator that binds mRNA to regulate translation initiation and/or mRNA stability. Usually binds in the 5'-UTR at or near the Shine-Dalgarno sequence preventing ribosome-binding, thus repressing translation. Its main target seems to be the major flagellin gene, while its function is anatagonized by FliW. The sequence is that of Translational regulator CsrA from Alkaliphilus oremlandii (strain OhILAs) (Clostridium oremlandii (strain OhILAs)).